An 887-amino-acid chain; its full sequence is Autotaxin (887 aa).

The first 27 residues, 1–27 (MARQGCLGSFQVISLFTFAISVNICLG), serve as a signal peptide directing secretion. Positions 28 to 35 (FTASRIKR) are cleaved as a propeptide — removed by furin. Asn-53 is a glycosylation site (N-linked (GlcNAc...) asparagine). SMB domains lie at 54–97 (TSGS…LKTA) and 98–142 (RGWE…GESH). Disulfide bonds link Cys-58–Cys-75, Cys-62–Cys-93, Cys-73–Cys-86, Cys-79–Cys-85, Cys-102–Cys-119, Cys-107–Cys-137, Cys-117–Cys-130, Cys-123–Cys-129, Cys-148–Cys-194, and Cys-156–Cys-350. A Cell attachment site motif is present at residues 126–128 (RGD). Residues 144–501 (VDDDCEEIKV…PTFKYRTKVP (358 aa)) are phosphodiesterase. Residues Asp-171 and Thr-209 each coordinate Zn(2+). Thr-209 serves as the catalytic Nucleophile. The 1-(9Z-octadecenoyl)-sn-glycero-3-phosphate site is built by Thr-209, Asn-230, and Asp-311. Residues Thr-209, Asn-230, and Asp-311 each contribute to the 1-hexadecanoyl-sn-glycero-3-phosphate site. Residues Thr-209, Asn-230, and Asp-311 each coordinate 1-tetradecanoyl-sn-glycerol 3-phosphate. Positions 311, 315, 358, and 359 each coordinate Zn(2+). Cystine bridges form between Cys-366-Cys-468, Cys-413-Cys-830, Cys-566-Cys-691, Cys-568-Cys-676, and Cys-799-Cys-809. 2 N-linked (GlcNAc...) asparagine glycosylation sites follow: Asn-398 and Asn-410. His-474 contributes to the Zn(2+) binding site. His-474 is a 1-(9Z-octadecenoyl)-sn-glycero-3-phosphate binding site. His-474 lines the 1-hexadecanoyl-sn-glycero-3-phosphate pocket. His-474 contributes to the 1-tetradecanoyl-sn-glycerol 3-phosphate binding site. The N-linked (GlcNAc...) asparagine glycan is linked to Asn-524. Residues 586–607 (HTKGSTEAETGKFRGSKHENKK) show a composition bias toward basic and acidic residues. Positions 586–615 (HTKGSTEAETGKFRGSKHENKKNLNGSVEP) are disordered. A glycan (N-linked (GlcNAc...) asparagine) is linked at Asn-610. Positions 622–887 (LYGRPAVLYR…TYLHTYESEI (266 aa)) are nuclease-like domain. The Ca(2+) site is built by Asp-764, Asn-766, Asp-768, Leu-770, and Asp-772. N-linked (GlcNAc...) asparagine glycosylation is present at Asn-831. The tract at residues 854–875 (IEHLTGLDFYRKTSRSYSEILT) is required for secretion.

It belongs to the nucleotide pyrophosphatase/phosphodiesterase family. Zn(2+) is required as a cofactor. Ca(2+) serves as cofactor. Post-translationally, N-glycosylation, but not furin-cleavage, plays a critical role on secretion and on lysoPLD activity. The interdomain disulfide bond between Cys-413 and Cys-830 is essential for catalytic activity. In terms of tissue distribution, abundantly expressed in cerebrum and cerebellum. Localized in secretory epithelial cells in the brain and the eye including choroid plexus epithelial cells, ciliary epithelial cells, iris pigment epithelial cells, and retinal pigment cells.

It is found in the secreted. The catalysed reaction is a 1-O-alkyl-sn-glycero-3-phosphoethanolamine + H2O = a 1-O-alkyl-sn-glycero-3-phosphate + ethanolamine + H(+). The enzyme catalyses a 1-acyl-sn-glycero-3-phosphoethanolamine + H2O = a 1-acyl-sn-glycero-3-phosphate + ethanolamine + H(+). It catalyses the reaction 1-(9Z-octadecenoyl)-sn-glycero-3-phosphoethanolamine + H2O = 1-(9Z-octadecenoyl)-sn-glycero-3-phosphate + ethanolamine + H(+). It carries out the reaction a 1-O-alkyl-sn-glycero-3-phosphocholine + H2O = a 1-O-alkyl-sn-glycero-3-phosphate + choline + H(+). The catalysed reaction is 1-O-(9Z-octadecenyl)-sn-glycero-3-phosphocholine + H2O = 1-O-(9Z-octadecenyl)-sn-glycero-3-phosphate + choline + H(+). The enzyme catalyses 1-O-hexadecyl-sn-glycero-3-phosphocholine + H2O = 1-O-hexadecyl-sn-glycero-3-phosphate + choline + H(+). It catalyses the reaction a 1-O-(1Z-alkenyl)-sn-glycero-3-phosphocholine + H2O = a 1-O-(1Z-alkenyl)-sn-glycero-3-phosphate + choline + H(+). It carries out the reaction a 1-acyl-sn-glycero-3-phosphocholine + H2O = a 1-acyl-sn-glycero-3-phosphate + choline + H(+). The catalysed reaction is 1-dodecanoyl-sn-glycero-3-phosphocholine + H2O = 1-dodecanoyl-sn-glycerol 3-phosphate + choline + H(+). The enzyme catalyses 1-(9Z-octadecenoyl)-sn-glycero-3-phosphocholine + H2O = 1-(9Z-octadecenoyl)-sn-glycero-3-phosphate + choline + H(+). It catalyses the reaction 1-tetradecanoyl-sn-glycero-3-phosphocholine + H2O = 1-tetradecanoyl-sn-glycerol 3-phosphate + choline + H(+). It carries out the reaction 1-decanoyl-sn-glycero-3-phosphocholine + H2O = 1-decanoyl-sn-glycero-3-phosphate + choline + H(+). The catalysed reaction is 1-octadecanoyl-sn-glycero-3-phosphocholine + H2O = 1-octadecanoyl-sn-glycero-3-phosphate + choline + H(+). The enzyme catalyses 1-hexadecanoyl-sn-glycero-3-phosphocholine + H2O = 1-hexadecanoyl-sn-glycero-3-phosphate + choline + H(+). It catalyses the reaction 1-hexanoyl-sn-glycero-3-phosphocholine + H2O = 1-hexanoyl-sn-glycero-3-phosphate + choline + H(+). It carries out the reaction 1-(9Z,12Z)-octadecadienoyl-sn-glycero-3-phosphocholine + H2O = 1-(9Z,12Z)-octadecadienoyl-sn-glycero-3-phosphate + choline + H(+). The catalysed reaction is sphing-4-enine-phosphocholine + H2O = sphing-4-enine 1-phosphate + choline + H(+). The enzyme catalyses 1-(5Z,8Z,11Z,14Z-eicosatetraenoyl)-sn-glycero-3-phosphocholine + H2O = 1-(5Z,8Z,11Z,14Z-eicosatetraenoyl)-sn-glycero-3-phosphate + choline + H(+). It catalyses the reaction a 2-acyl-sn-glycero-3-phosphocholine + H2O = a 2-acyl-sn-glycerol 3-phosphate + choline + H(+). It carries out the reaction a 1,2-diacyl-sn-glycero-3-phosphocholine + H2O = a 1,2-diacyl-sn-glycero-3-phosphate + choline + H(+). The catalysed reaction is 1,2-dioctanoyl-sn-glycero-3-phosphocholine + H2O = 1,2-dioctanoyl-sn-glycero-3-phosphate + choline + H(+). The enzyme catalyses 1,2-didecanoyl-sn-glycero-3-phosphocholine + H2O = 1,2-didecanoyl-sn-glycero-3-phosphate + choline + H(+). It catalyses the reaction a 1-acyl-sn-glycero-3-phospho-L-serine + H2O = a 1-acyl-sn-glycero-3-phosphate + L-serine + H(+). It carries out the reaction 1-(9Z-octadecenoyl)-sn-glycero-3-phospho-L-serine + H2O = 1-(9Z-octadecenoyl)-sn-glycero-3-phosphate + L-serine + H(+). The catalysed reaction is a 2-acyl-sn-glycero-3-phospho-L-serine + H2O = a 2-acyl-sn-glycerol 3-phosphate + L-serine + H(+). Its activity is regulated as follows. Inhibited by vanadate. Inhibited by micromolar levels of bile salts, such as tauroursodeoxycholate. Not inhibited by taurodeoxycholate. Not inhibited by hydroxysterols, such as 7-hydroxycholesterol, testosterone, dexamethasone and prednisolone. Inhibited by EDTA and EGTA. Secreted lysophospholipase D that hydrolyzes lysophospholipids to produce the signaling molecule lysophosphatidic acid (LPA) in extracellular fluids. Its major substrate is lysophosphatidylcholine. Can also act on sphingosylphosphorylcholine producing sphingosine-1-phosphate, a modulator of cell motility. Can hydrolyze, in vitro, bis-pNPP, to some extent pNP-TMP, and barely ATP. Involved in several motility-related processes such as angiogenesis and neurite outgrowth. Acts as an angiogenic factor by stimulating migration of smooth muscle cells and microtubule formation. Stimulates migration of melanoma cells, probably via a pertussis toxin-sensitive G protein. May have a role in induction of parturition. Possible involvement in cell proliferation and adipose tissue development. Required for LPA production in activated platelets, cleaves the sn-1 lysophospholipids to generate sn-1 lysophosphatidic acids containing predominantly 18:2 and 20:4 fatty acids. Shows a preference for the sn-1 to the sn-2 isomer of 1-O-alkyl-sn-glycero-3-phosphocholine (lyso-PAF). The protein is Autotaxin of Rattus norvegicus (Rat).